A 530-amino-acid polypeptide reads, in one-letter code: Bifunctional purine biosynthesis protein PurH (530 aa).

An MGS-like domain is found at 1–148 (MNNARPIRRA…KNHKDVTIVV (148 aa)).

It belongs to the PurH family.

The catalysed reaction is (6R)-10-formyltetrahydrofolate + 5-amino-1-(5-phospho-beta-D-ribosyl)imidazole-4-carboxamide = 5-formamido-1-(5-phospho-D-ribosyl)imidazole-4-carboxamide + (6S)-5,6,7,8-tetrahydrofolate. The enzyme catalyses IMP + H2O = 5-formamido-1-(5-phospho-D-ribosyl)imidazole-4-carboxamide. It functions in the pathway purine metabolism; IMP biosynthesis via de novo pathway; 5-formamido-1-(5-phospho-D-ribosyl)imidazole-4-carboxamide from 5-amino-1-(5-phospho-D-ribosyl)imidazole-4-carboxamide (10-formyl THF route): step 1/1. The protein operates within purine metabolism; IMP biosynthesis via de novo pathway; IMP from 5-formamido-1-(5-phospho-D-ribosyl)imidazole-4-carboxamide: step 1/1. The sequence is that of Bifunctional purine biosynthesis protein PurH from Vibrio campbellii (strain ATCC BAA-1116).